Consider the following 525-residue polypeptide: Cobyric acid synthase (525 aa).

The GATase cobBQ-type domain occupies 251–452; the sequence is ELEIAVLYLP…FHGIFDNDLL (202 aa). The active-site Nucleophile is the C332. H444 is a catalytic residue.

Belongs to the CobB/CobQ family. CobQ subfamily.

Its pathway is cofactor biosynthesis; adenosylcobalamin biosynthesis. Functionally, catalyzes amidations at positions B, D, E, and G on adenosylcobyrinic A,C-diamide. NH(2) groups are provided by glutamine, and one molecule of ATP is hydrogenolyzed for each amidation. This Pelotomaculum thermopropionicum (strain DSM 13744 / JCM 10971 / SI) protein is Cobyric acid synthase.